Reading from the N-terminus, the 603-residue chain is Elongation factor 4 (603 aa).

Residues 7–189 (SRIRNFSIIA…SIVHLVPPPQ (183 aa)) form the tr-type G domain. Residues 19 to 24 (DHGKST) and 136 to 139 (NKID) contribute to the GTP site.

This sequence belongs to the TRAFAC class translation factor GTPase superfamily. Classic translation factor GTPase family. LepA subfamily.

The protein resides in the cell inner membrane. The enzyme catalyses GTP + H2O = GDP + phosphate + H(+). Functionally, required for accurate and efficient protein synthesis under certain stress conditions. May act as a fidelity factor of the translation reaction, by catalyzing a one-codon backward translocation of tRNAs on improperly translocated ribosomes. Back-translocation proceeds from a post-translocation (POST) complex to a pre-translocation (PRE) complex, thus giving elongation factor G a second chance to translocate the tRNAs correctly. Binds to ribosomes in a GTP-dependent manner. The chain is Elongation factor 4 from Cyanothece sp. (strain PCC 7425 / ATCC 29141).